We begin with the raw amino-acid sequence, 1348 residues long: Kinesin-like protein KIF7 (1348 aa).

The region spanning 15-349 (PVRVALRVRP…LNYASRAQNI (335 aa)) is the Kinesin motor domain. An ATP-binding site is contributed by 94–101 (GQTGSGKT). The segment at 358-479 (HPEAERVPEE…EDQAAQGTSG (122 aa)) is interaction with DLG5. The interaction with SMO stretch occupies residues 358 to 1211 (HPEAERVPEE…LGRHMWINQE (854 aa)). Disordered stretches follow at residues 451–486 (RSTL…DEGT) and 607–674 (AQAD…VCPE). A coiled-coil region spans residues 480–542 (RKGDEGTQQL…ELRLRLELAQ (63 aa)). The segment covering 620-636 (SEEEGEEEEEEEEEEEE) has biased composition (acidic residues). Coiled-coil stretches lie at residues 698–1057 (APAA…IEAL) and 1109–1211 (FDKV…INQE). Residue Ser903 is modified to Phosphoserine. 2 disordered regions span residues 1288 to 1314 (LCSE…VLPM) and 1328 to 1348 (KPRW…KNPL).

Belongs to the TRAFAC class myosin-kinesin ATPase superfamily. Kinesin family. Can form homodimers and interacts with microtubules. Interacts with GLI1 and SMO. Interacts with GLI2, GLI3 and SUFU. Interacts with NPHP1. Interacts with SMO and DLG5 (via PDZ4 or guanylate kinase-like domain). Post-translationally, polyubiquitinated by UBR3. As to expression, expressed in heart, lung, liver, kidney, testis, spleen and cerebellum.

The protein localises to the cell projection. It is found in the cilium. Its subcellular location is the cytoplasm. The protein resides in the cytoskeleton. It localises to the cilium basal body. In terms of biological role, essential for hedgehog signaling regulation: acts both as a negative and a positive regulator of sonic hedgehog (Shh) and Indian hedgehog (Ihh) pathways, acting downstream of SMO, through both SUFU-dependent and -independent mechanisms. Involved in the regulation of microtubular dynamics. Required for proper organization of the ciliary tip and control of ciliary localization of SUFU-GLI2 complexes. Required for localization of GLI3 to cilia in response to Shh. Negatively regulates Shh signaling by preventing inappropriate activation of the transcriptional activator GLI2 in the absence of ligand. Positively regulates Shh signaling by preventing the processing of the transcription factor GLI3 into its repressor form. In keratinocytes, promotes the dissociation of SUFU-GLI2 complexes, GLI2 nuclear translocation and Shh signaling activation. Involved in the regulation of epidermal differentiation and chondrocyte development. The polypeptide is Kinesin-like protein KIF7 (Kif7) (Mus musculus (Mouse)).